Reading from the N-terminus, the 532-residue chain is Probable cytochrome P450 524A1 (532 aa).

Residues 8–28 traverse the membrane as a helical segment; that stretch reads FIIFILLAALAVFVSEATSKV. C478 contributes to the heme binding site.

This sequence belongs to the cytochrome P450 family. Heme is required as a cofactor.

Its subcellular location is the membrane. In Dictyostelium discoideum (Social amoeba), this protein is Probable cytochrome P450 524A1 (cyp524A1).